We begin with the raw amino-acid sequence, 415 residues long: Calreticulin (415 aa).

An N-terminal signal peptide occupies residues 1–20 (MANPKSLSLFLLSLLAIASA). Asn52 carries an N-linked (GlcNAc...) asparagine glycan. Cys106 and Cys138 are joined by a disulfide. Residues Tyr110, Lys112, Tyr129, and Asp136 each contribute to the an alpha-D-glucoside site. Asn152 carries an N-linked (GlcNAc...) asparagine glycan. Tandem repeats lie at residues 192–203 (KQTGSLYTDWDL), 211–222 (DPEAKKPEDWDE), 228–239 (DPEDKKPEGYDD), 246–257 (DPDAKKPEDWDD), 261–271 (GEWTAPTIANP), 275–285 (GPWKPKKIKNP), and 289–299 (GKWKAPMIDNP). Residues 192–257 (KQTGSLYTDW…DAKKPEDWDD (66 aa)) are 4 X approximate repeats. Positions 208 to 253 (KIKDPEAKKPEDWDEKEYIPDPEDKKPEGYDDIPKEIPDPDAKKPE) are enriched in basic and acidic residues. The interval 208-276 (KIKDPEAKKP…TIANPEYKGP (69 aa)) is disordered. Residues 261-299 (GEWTAPTIANPEYKGPWKPKKIKNPNYKGKWKAPMIDNP) are 3 X approximate repeats. Position 319 (Glu319) interacts with an alpha-D-glucoside. Positions 347–376 (ETWGKNKDAEKAAFEEAEKKKEEEESKDDP) are enriched in basic and acidic residues. Positions 347 to 415 (ETWGKNKDAE…DSAEDVHDEL (69 aa)) are disordered. Acidic residues-rich tracts occupy residues 377-397 (ADSDADEDDDDADDTEGEDDG) and 404-415 (AEDSAEDVHDEL). Residues 412 to 415 (HDEL) carry the Prevents secretion from ER motif.

Belongs to the calreticulin family.

Its subcellular location is the endoplasmic reticulum lumen. In terms of biological role, molecular calcium-binding chaperone promoting folding, oligomeric assembly and quality control in the ER via the calreticulin/calnexin cycle. This lectin may interact transiently with almost all of the monoglucosylated glycoproteins that are synthesized in the ER. The chain is Calreticulin from Ricinus communis (Castor bean).